Here is a 229-residue protein sequence, read N- to C-terminus: Protein rep (229 aa).

Tyr-214 is a DNA binding site.

It belongs to the Gram-positive plasmids replication protein type 1 family.

Functionally, produces a single-strand nick in a specific site of the plasmid, and this nick results in single-strand replication by rolling circle mechanism. The protein is Protein rep of Staphylococcus aureus.